Consider the following 706-residue polypeptide: 1,4-alpha-glucan-branching enzyme (706 aa).

Residues Trp-96 and Lys-133 each contribute to the (1,4-alpha-D-glucosyl)n site. Asp-358 (nucleophile) is an active-site residue. Glu-419 functions as the Proton donor in the catalytic mechanism.

Belongs to the glycosyl hydrolase 13 family. GlgB subfamily. As to quaternary structure, monomer.

Its subcellular location is the cytoplasm. It carries out the reaction Transfers a segment of a (1-&gt;4)-alpha-D-glucan chain to a primary hydroxy group in a similar glucan chain.. Its pathway is glycan biosynthesis; glycogen biosynthesis. Glycogen-branching enzyme participates in the glycogen biosynthetic process along with glycogenin and glycogen synthase. Generates alpha-1,6-glucosidic branches from alpha-1,4-linked glucose chains, to increase solubility of the glycogen polymer. This Candida glabrata (strain ATCC 2001 / BCRC 20586 / JCM 3761 / NBRC 0622 / NRRL Y-65 / CBS 138) (Yeast) protein is 1,4-alpha-glucan-branching enzyme (GLC3).